A 516-amino-acid chain; its full sequence is (R)-citramalate synthase CimA (516 aa).

The Pyruvate carboxyltransferase domain occupies leucine 8 to threonine 269. Arginine 16 serves as the catalytic Proton donor. Pyruvate is bound by residues arginine 16–aspartate 17 and tyrosine 144. Residue aspartate 17 coordinates Mn(2+). Glutamate 146 acts as the Proton acceptor in catalysis. Residue threonine 179 participates in pyruvate binding. Mn(2+)-binding residues include histidine 207 and histidine 209.

Belongs to the alpha-IPM synthase/homocitrate synthase family. Homodimer. It depends on Mn(2+) as a cofactor.

The enzyme catalyses pyruvate + acetyl-CoA + H2O = (3R)-citramalate + CoA + H(+). The protein operates within amino-acid biosynthesis; L-isoleucine biosynthesis; 2-oxobutanoate from pyruvate: step 1/3. Its activity is regulated as follows. Regulated by the end-product isoleucine via a feedback inhibition. The binding of isoleucine has inhibitory effects on the binding of both pyruvate and acetyl-CoA. May act via conformational change of the dimer interface of the regulatory domain, leading to inhibition of the catalytic reaction. Functionally, catalyzes the condensation of pyruvate and acetyl-coenzyme A to form (R)-citramalate. Shows strict substrate specificity for pyruvate. Cannot use alpha-ketoisovalerate, alpha-ketobutyrate, alpha-ketoisocaproate, alpha-ketoglutarate or glyoxylate. The polypeptide is (R)-citramalate synthase CimA (Leptospira interrogans serogroup Icterohaemorrhagiae serovar Lai (strain 56601)).